Reading from the N-terminus, the 276-residue chain is ADP-dependent (S)-NAD(P)H-hydrate dehydratase (276 aa).

The region spanning 5–269 (TPKAMCAWIP…EELPTYLKIF (265 aa)) is the YjeF C-terminal domain. (6S)-NADPHX is bound by residues alanine 40, glycine 103, and histidine 152. Glycine 211 contributes to the AMP binding site. Residue aspartate 212 participates in (6S)-NADPHX binding.

This sequence belongs to the NnrD/CARKD family. Homotetramer. Mg(2+) serves as cofactor.

The enzyme catalyses (6S)-NADHX + ADP = AMP + phosphate + NADH + H(+). It catalyses the reaction (6S)-NADPHX + ADP = AMP + phosphate + NADPH + H(+). Functionally, catalyzes the dehydration of the S-form of NAD(P)HX at the expense of ADP, which is converted to AMP. Together with NAD(P)HX epimerase, which catalyzes the epimerization of the S- and R-forms, the enzyme allows the repair of both epimers of NAD(P)HX, a damaged form of NAD(P)H that is a result of enzymatic or heat-dependent hydration. This is ADP-dependent (S)-NAD(P)H-hydrate dehydratase from Listeria monocytogenes serovar 1/2a (strain ATCC BAA-679 / EGD-e).